We begin with the raw amino-acid sequence, 2197 residues long: Activating signal cointegrator 1 complex subunit 3 (2197 aa).

At serine 12 the chain carries Phosphoserine. Coiled coils occupy residues 18–80 and 328–356; these read KQDN…AKQI and IQSEQEKQLMKQYRREEKRIARREKKAGE. The Helicase ATP-binding 1 domain occupies 487 to 670; it reads DTAYNTNENM…FLHVNPYIGL (184 aa). An ATP-binding site is contributed by 500-507; the sequence is APTGAGKT. At lysine 573 the chain carries N6-acetyllysine. The DEVH box signature appears at 612–615; sequence DEVH. Residues 697-915 form the Helicase C-terminal 1 domain; sequence QLNNMDEVCY…GTVTNVEEAV (219 aa). In terms of domain architecture, SEC63 1 spans 979–1288; it reads STDLGRTASH…GAEAVCIINF (310 aa). The Helicase ATP-binding 2 domain occupies 1337-1512; it reads HTLYHTDCNV…WLNIKQMGLF (176 aa). 1350–1357 lines the ATP pocket; sequence APTGSGKT. A DEIH box motif is present at residues 1454–1457; the sequence is DEIH. The Helicase C-terminal 2 domain occupies 1565-1739; sequence RMLSSMTKLE…VLSDHLNAEI (175 aa). The SEC63 2 domain maps to 1812-2175; the sequence is PLTCGRIASY…YLGLDQQYDI (364 aa).

Belongs to the helicase family. Identified in the ASCC complex that contains ASCC1, ASCC2 and ASCC3. Functions as a scaffolding subunit that interacts directly with both ASCC1 and ASCC2. Interacts directly with ALKBH3, and thereby recruits ALKBH3 to the ASCC complex. Part of the ASC-1/TRIP4 complex, that contains TRIP4, ASCC1, ASCC2 and ASCC3. Part of the RQT (ribosome quality control trigger) complex, that contains ASCC2, ASCC3 and TRIP4. Associates with ribosomes; recruited to collided ribosomes. Interacts with ZCCHC4. Interacts with ZNF598. Interacts with RPS3.

The protein localises to the nucleus. The protein resides in the nucleus speckle. It is found in the cytoplasm. Its subcellular location is the cytosol. It catalyses the reaction Couples ATP hydrolysis with the unwinding of duplex DNA by translocating in the 3'-5' direction.. The enzyme catalyses ATP + H2O = ADP + phosphate + H(+). Functionally, ATPase involved both in DNA repair and rescue of stalled ribosomes. 3'-5' DNA helicase involved in repair of alkylated DNA: promotes DNA unwinding to generate single-stranded substrate needed for ALKBH3, enabling ALKBH3 to process alkylated N3-methylcytosine (3mC) within double-stranded regions. Also involved in activation of the ribosome quality control (RQC) pathway, a pathway that degrades nascent peptide chains during problematic translation. Drives the splitting of stalled ribosomes that are ubiquitinated in a ZNF598-dependent manner, as part of the ribosome quality control trigger (RQT) complex. Part of the ASC-1 complex that enhances NF-kappa-B, SRF and AP1 transactivation. This is Activating signal cointegrator 1 complex subunit 3 (Ascc3) from Rattus norvegicus (Rat).